A 455-amino-acid chain; its full sequence is Adenylyltransferase and sulfurtransferase UBA4 (455 aa).

ATP contacts are provided by residues Gly-93, Asp-114, 121–125 (SNLHR), Lys-138, and 182–183 (DH). Cys-224 and Cys-227 together coordinate Zn(2+). Cys-241 functions as the Glycyl thioester intermediate; for adenylyltransferase activity in the catalytic mechanism. Residues Cys-302 and Cys-305 each coordinate Zn(2+). Residues 355–453 (QSREHTLIDV…WSEDIDAAFP (99 aa)) enclose the Rhodanese domain. The active-site Cysteine persulfide intermediate; for sulfurtransferase activity is Cys-413.

It in the N-terminal section; belongs to the HesA/MoeB/ThiF family. UBA4 subfamily. Zn(2+) serves as cofactor.

The protein localises to the cytoplasm. Its subcellular location is the cytosol. It participates in tRNA modification; 5-methoxycarbonylmethyl-2-thiouridine-tRNA biosynthesis. Functionally, plays a central role in 2-thiolation of mcm(5)S(2)U at tRNA wobble positions of cytosolic tRNA(Lys), tRNA(Glu) and tRNA(Gln). Acts by mediating the C-terminal thiocarboxylation of sulfur carrier URM1. Its N-terminus first activates URM1 as acyl-adenylate (-COAMP), then the persulfide sulfur on the catalytic cysteine is transferred to URM1 to form thiocarboxylation (-COSH) of its C-terminus. The reaction probably involves hydrogen sulfide that is generated from the persulfide intermediate and that acts as a nucleophile towards URM1. Subsequently, a transient disulfide bond is formed. Does not use thiosulfate as sulfur donor; NFS1 probably acting as a sulfur donor for thiocarboxylation reactions. Prior mcm(5) tRNA modification by the elongator complex is required for 2-thiolation. May also be involved in protein urmylation. The protein is Adenylyltransferase and sulfurtransferase UBA4 of Lodderomyces elongisporus (strain ATCC 11503 / CBS 2605 / JCM 1781 / NBRC 1676 / NRRL YB-4239) (Yeast).